The sequence spans 172 residues: Shikimate kinase (172 aa).

ATP is bound at residue Gly11–Thr16. Ser15 provides a ligand contact to Mg(2+). Residues Asp33, Arg57, and Gly79 each contribute to the substrate site. Arg117 serves as a coordination point for ATP. Arg136 lines the substrate pocket. ATP is bound at residue Arg153.

This sequence belongs to the shikimate kinase family. As to quaternary structure, monomer. It depends on Mg(2+) as a cofactor.

It localises to the cytoplasm. The catalysed reaction is shikimate + ATP = 3-phosphoshikimate + ADP + H(+). The protein operates within metabolic intermediate biosynthesis; chorismate biosynthesis; chorismate from D-erythrose 4-phosphate and phosphoenolpyruvate: step 5/7. Functionally, catalyzes the specific phosphorylation of the 3-hydroxyl group of shikimic acid using ATP as a cosubstrate. In Pseudomonas fluorescens (strain Pf0-1), this protein is Shikimate kinase.